We begin with the raw amino-acid sequence, 480 residues long: Protein nucleotidyltransferase YdiU (480 aa).

Positions 87, 89, 90, 110, 122, 123, 173, and 180 each coordinate ATP. The active-site Proton acceptor is Asp249. Asn250 and Asp259 together coordinate Mg(2+). Asp259 serves as a coordination point for ATP.

This sequence belongs to the SELO family. Requires Mg(2+) as cofactor. Mn(2+) serves as cofactor.

The enzyme catalyses L-seryl-[protein] + ATP = 3-O-(5'-adenylyl)-L-seryl-[protein] + diphosphate. It catalyses the reaction L-threonyl-[protein] + ATP = 3-O-(5'-adenylyl)-L-threonyl-[protein] + diphosphate. The catalysed reaction is L-tyrosyl-[protein] + ATP = O-(5'-adenylyl)-L-tyrosyl-[protein] + diphosphate. It carries out the reaction L-histidyl-[protein] + UTP = N(tele)-(5'-uridylyl)-L-histidyl-[protein] + diphosphate. The enzyme catalyses L-seryl-[protein] + UTP = O-(5'-uridylyl)-L-seryl-[protein] + diphosphate. It catalyses the reaction L-tyrosyl-[protein] + UTP = O-(5'-uridylyl)-L-tyrosyl-[protein] + diphosphate. Functionally, nucleotidyltransferase involved in the post-translational modification of proteins. It can catalyze the addition of adenosine monophosphate (AMP) or uridine monophosphate (UMP) to a protein, resulting in modifications known as AMPylation and UMPylation. The protein is Protein nucleotidyltransferase YdiU of Anoxybacillus flavithermus (strain DSM 21510 / WK1).